The primary structure comprises 362 residues: Biotin synthase (362 aa).

Residues 14–39 are disordered; that stretch reads AQRTPEPLPPTSQGLARPSHDVVRGP. In terms of domain architecture, Radical SAM core spans 87–316; the sequence is HKGGPAALCG…ARDILVCGGR (230 aa). [4Fe-4S] cluster contacts are provided by Cys105, Cys109, and Cys112. Cys181 and Cys241 together coordinate [2Fe-2S] cluster.

Belongs to the radical SAM superfamily. Biotin synthase family. Homodimer. [4Fe-4S] cluster serves as cofactor. [2Fe-2S] cluster is required as a cofactor.

It carries out the reaction (4R,5S)-dethiobiotin + (sulfur carrier)-SH + 2 reduced [2Fe-2S]-[ferredoxin] + 2 S-adenosyl-L-methionine = (sulfur carrier)-H + biotin + 2 5'-deoxyadenosine + 2 L-methionine + 2 oxidized [2Fe-2S]-[ferredoxin]. It participates in cofactor biosynthesis; biotin biosynthesis; biotin from 7,8-diaminononanoate: step 2/2. Catalyzes the conversion of dethiobiotin (DTB) to biotin by the insertion of a sulfur atom into dethiobiotin via a radical-based mechanism. This is Biotin synthase from Nitratidesulfovibrio vulgaris (strain ATCC 29579 / DSM 644 / CCUG 34227 / NCIMB 8303 / VKM B-1760 / Hildenborough) (Desulfovibrio vulgaris).